A 363-amino-acid chain; its full sequence is Glyceraldehyde-3-phosphate dehydrogenase, muscle (363 aa).

Positions 1 to 176 (MVKVGVNGFG…KYDKSLKIVS (176 aa)) are interaction with WARS. The residue at position 3 (Lys3) is an N6,N6-dimethyllysine. Asn7 carries the deamidated asparagine modification. Residues 11 to 12 (RI) and Asp33 each bind NAD(+). Tyr70 carries the phosphotyrosine modification. Residue Lys89 is modified to N6-acetyllysine. Asn92 carries the deamidated asparagine modification. The residue at position 94 (Lys94) is an N6,N6-dimethyllysine. A Deamidated asparagine modification is found at Asn98. Thr103 bears the Phosphothreonine mark. NAD(+) contacts are provided by Arg108 and Ser150. A phosphoserine mark is found at Ser150 and Ser176. A Deamidated asparagine modification is found at Asn177. Ser179 carries the phosphoserine modification. D-glyceraldehyde 3-phosphate is bound at residue 179–181 (SCT). Cys180 acts as the Nucleophile in catalysis. Cys180 bears the ADP-ribosylcysteine; by autocatalysis; in irreversibly inhibited form mark. A Cysteine persulfide modification is found at Cys180. Cys180 carries the S-(2-succinyl)cysteine modification. The residue at position 180 (Cys180) is an S-nitrosocysteine; in reversibly inhibited form. Phosphothreonine is present on Thr181. Asn183 carries the deamidated asparagine modification. A phosphothreonine mark is found at Thr205, Thr210, and Thr212. Thr210 is a D-glyceraldehyde 3-phosphate binding site. Lys214 is covalently cross-linked (Glycyl lysine isopeptide (Lys-Gly) (interchain with G-Cter in SUMO2)). Position 222 is an N6,N6-dimethyllysine; alternate (Lys222). N6-acetyllysine; alternate is present on Lys222. An N6-malonyllysine; alternate modification is found at Lys222. Thr239 bears the Phosphothreonine mark. 239-240 (TG) is a D-glyceraldehyde 3-phosphate binding site. At Lys243 the chain carries N6,N6-dimethyllysine; alternate. At Lys243 the chain carries N6-malonyllysine; alternate. Lys247 carries the N6-acetyllysine modification. Deamidated asparagine is present on Asn253. Lys255 bears the N6,N6-dimethyllysine; alternate mark. N6-acetyllysine; alternate is present on Lys255. A Phosphothreonine modification is found at Thr257. Arg262 contacts D-glyceraldehyde 3-phosphate. At Thr265 the chain carries Phosphothreonine. A Phosphoserine modification is found at Ser269. Cys275 carries the S-(2-succinyl)cysteine modification. S-nitrosocysteine is present on Cys275. Position 282 is an N6-acetyllysine (Lys282). Position 291 is an N6,N6-dimethyllysine (Lys291). Ser340 bears the Phosphoserine mark. Position 344 is a deamidated asparagine (Asn344). Residue Asn344 participates in NAD(+) binding. Ser361 carries the post-translational modification Phosphoserine. At Lys362 the chain carries N6,N6-dimethyllysine.

It belongs to the glyceraldehyde-3-phosphate dehydrogenase family. Homotetramer. Interacts with TPPP; the interaction is direct. Interacts (when S-nitrosylated) with SIAH1; leading to nuclear translocation. Interacts with RILPL1/GOSPEL, leading to prevent the interaction between GAPDH and SIAH1 and prevent nuclear translocation. Interacts with CHP1; the interaction increases the binding of CHP1 with microtubules. Associates with microtubules. Interacts with EIF1AD, USP25, PRKCI and WARS1. Interacts with phosphorylated RPL13A; inhibited by oxidatively-modified low-densitity lipoprotein (LDL(ox)). Component of the GAIT complex. Interacts with FKBP6; leading to inhibit GAPDH catalytic activity. Interacts with TRAF2, promoting TRAF2 ubiquitination. Interacts with TRAF3, promoting TRAF3 ubiquitination. ISGylated. Post-translationally, S-nitrosylation of Cys-180 leads to interaction with SIAH1, followed by translocation to the nucleus S-nitrosylation of Cys-275 is induced by interferon-gamma and LDL(ox) implicating the iNOS-S100A8/9 transnitrosylase complex and seems to prevent interaction with phosphorylated RPL13A and to interfere with GAIT complex activity. In terms of processing, sulfhydration at Cys-180 increases catalytic activity.

The protein localises to the cytoplasm. It is found in the cytosol. Its subcellular location is the cytoskeleton. It localises to the nucleus. The enzyme catalyses D-glyceraldehyde 3-phosphate + phosphate + NAD(+) = (2R)-3-phospho-glyceroyl phosphate + NADH + H(+). It catalyses the reaction S-nitroso-L-cysteinyl-[GAPDH] + L-cysteinyl-[protein] = L-cysteinyl-[GAPDH] + S-nitroso-L-cysteinyl-[protein]. The protein operates within carbohydrate degradation; glycolysis; pyruvate from D-glyceraldehyde 3-phosphate: step 1/5. With respect to regulation, glyceraldehyde-3-phosphate dehydrogenase activity is inhibited by fumarate, via the formation of S-(2-succinyl)cysteine residues. Its function is as follows. Has both glyceraldehyde-3-phosphate dehydrogenase and nitrosylase activities, thereby playing a role in glycolysis and nuclear functions, respectively. Glyceraldehyde-3-phosphate dehydrogenase is a key enzyme in glycolysis that catalyzes the first step of the pathway by converting D-glyceraldehyde 3-phosphate (G3P) into 3-phospho-D-glyceroyl phosphate. Modulates the organization and assembly of the cytoskeleton. Facilitates the CHP1-dependent microtubule and membrane associations through its ability to stimulate the binding of CHP1 to microtubules. Component of the GAIT (gamma interferon-activated inhibitor of translation) complex which mediates interferon-gamma-induced transcript-selective translation inhibition in inflammation processes. Upon interferon-gamma treatment assembles into the GAIT complex which binds to stem loop-containing GAIT elements in the 3'-UTR of diverse inflammatory mRNAs (such as ceruplasmin) and suppresses their translation. Also plays a role in innate immunity by promoting TNF-induced NF-kappa-B activation and type I interferon production, via interaction with TRAF2 and TRAF3, respectively. Participates in nuclear events including transcription, RNA transport, DNA replication and apoptosis. Nuclear functions are probably due to the nitrosylase activity that mediates cysteine S-nitrosylation of nuclear target proteins such as SIRT1, HDAC2 and PRKDC. This Jaculus orientalis (Greater Egyptian jerboa) protein is Glyceraldehyde-3-phosphate dehydrogenase, muscle.